The primary structure comprises 207 residues: Ribosomal RNA small subunit methyltransferase G (207 aa).

S-adenosyl-L-methionine contacts are provided by residues Gly74, Leu79, 125-126 (VE), and Arg140.

It belongs to the methyltransferase superfamily. RNA methyltransferase RsmG family.

It is found in the cytoplasm. The enzyme catalyses guanosine(527) in 16S rRNA + S-adenosyl-L-methionine = N(7)-methylguanosine(527) in 16S rRNA + S-adenosyl-L-homocysteine. Specifically methylates the N7 position of guanine in position 527 of 16S rRNA. In Shewanella loihica (strain ATCC BAA-1088 / PV-4), this protein is Ribosomal RNA small subunit methyltransferase G.